The following is a 189-amino-acid chain: Large ribosomal subunit protein uL5c (189 aa).

The protein belongs to the universal ribosomal protein uL5 family. Part of the 50S ribosomal subunit; contacts the 5S rRNA.

It localises to the plastid. The protein resides in the chloroplast. Binds 5S rRNA, forms part of the central protuberance of the 50S subunit. This chain is Large ribosomal subunit protein uL5c (rpl5), found in Chara vulgaris (Common stonewort).